The sequence spans 69 residues: MLYPSIDALQRTIPSKYTIVTVAAKRARQIQDGKAPKVAEPKSYKPVGQALEELFSGDTTIIVNEKNNG.

The protein belongs to the RNA polymerase subunit omega family. As to quaternary structure, the RNAP catalytic core consists of 2 alpha, 1 beta, 1 beta' and 1 omega subunit. When a sigma factor is associated with the core the holoenzyme is formed, which can initiate transcription.

The catalysed reaction is RNA(n) + a ribonucleoside 5'-triphosphate = RNA(n+1) + diphosphate. In terms of biological role, promotes RNA polymerase assembly. Latches the N- and C-terminal regions of the beta' subunit thereby facilitating its interaction with the beta and alpha subunits. The polypeptide is DNA-directed RNA polymerase subunit omega (Exiguobacterium sp. (strain ATCC BAA-1283 / AT1b)).